Consider the following 538-residue polypeptide: Lipid scramblase CLPTM1L (538 aa).

The Cytoplasmic portion of the chain corresponds to 1–10; that stretch reads MWSGRSSFTS. The chain crosses the membrane as a helical span at residues 11-31; sequence LVVGVFVVYVVHTCWVMYGIV. Residues 32 to 284 are Extracellular-facing; that stretch reads YTRPCSGHGR…VKGIFVDTNL (253 aa). 2 N-linked (GlcNAc...) asparagine glycosylation sites follow: N91 and N101. A helical membrane pass occupies residues 285–305; the sequence is YFLALTFFVAAFHLLFDFLAF. The Cytoplasmic portion of the chain corresponds to 306–324; sequence KNDISFWKKKKSMIGMSTK. The chain crosses the membrane as a helical span at residues 325-341; that stretch reads AVLWRCFSTVVIFLFLL. At 342–402 the chain is on the extracellular side; it reads DEQTSLPVLV…TEEYDAQAMK (61 aa). Residues 403 to 423 traverse the membrane as a helical segment; it reads YLSYLLYPLCIGGAIYSLLNI. Over 424 to 428 the chain is Cytoplasmic; that stretch reads KYKSW. The helical transmembrane segment at 429-449 threads the bilayer; it reads YSWLINSFVNGVYAFGFLFML. At 450 to 538 the chain is on the extracellular side; that stretch reads PQLFVNYKMK…DTPQRKPHTD (89 aa).

The protein belongs to the CLPTM1 family.

It is found in the endoplasmic reticulum membrane. The enzyme catalyses a 6-(alpha-D-glucosaminyl)-1-(1,2-diacyl-sn-glycero-3-phospho)-1D-myo-inositol(in) = a 6-(alpha-D-glucosaminyl)-1-(1,2-diacyl-sn-glycero-3-phospho)-1D-myo-inositol(out). It catalyses the reaction 6-(alpha-D-glucosaminyl)-(1-octadecanoyl,2-(9Z)-octadecenoyl-sn-glycero-3-phospho)-1D-myo-inositol(in) = 6-(alpha-D-glucosaminyl)-(1-octadecanoyl,2-(9Z)-octadecenoyl-sn-glycero-3-phospho)-1D-myo-inositol(out). It carries out the reaction a 1,2-diacyl-sn-glycero-3-phospho-(1D-myo-inositol)(in) = a 1,2-diacyl-sn-glycero-3-phospho-(1D-myo-inositol)(out). The catalysed reaction is a 1,2-diacyl-sn-glycero-3-phosphocholine(in) = a 1,2-diacyl-sn-glycero-3-phosphocholine(out). The enzyme catalyses a 1,2-diacyl-sn-glycero-3-phosphoethanolamine(in) = a 1,2-diacyl-sn-glycero-3-phosphoethanolamine(out). Scramblase that mediates the translocation of glucosaminylphosphatidylinositol (alpha-D-GlcN-(1-6)-(1,2-diacyl-sn-glycero-3-phospho)-1D-myo-inositol, GlcN-PI) across the endoplasmic reticulum (ER) membrane, from the cytosolic leaflet to the luminal leaflet of the ER membrane, where it participates in the biosynthesis of glycosylphosphatidylinositol (GPI). GPI is a lipid glycoconjugate involved in post-translational modification of proteins. Can also translocate 1,2-diacyl-sn-glycero-3-phospho-(1D-myo-inositol) (phosphatidylinositol or PI), as well as several other phospholipids (1,2-diacyl-sn-glycero-3-phosphocholine, 1,2-diacyl-sn-glycero-3-phosphoethanolamine), and N-acetylglucosaminylphosphatidylinositol (GlcNAc-PI) in vitro. This is Lipid scramblase CLPTM1L (CLPTM1L) from Bos taurus (Bovine).